We begin with the raw amino-acid sequence, 376 residues long: Zinc transporter 7 (376 aa).

Over 1–37 the chain is Cytoplasmic; that stretch reads MLPLSIKDDEYKPPKFNLFGKISGWFRSILSDKTSRN. Residues 38–58 form a helical membrane-spanning segment; the sequence is LFFFLCLNLSFAFVELLYGIW. The Lumenal segment spans residues 59–67; it reads SNCLGLISD. Residues 68–88 traverse the membrane as a helical segment; the sequence is SFHMFFDSTAILAGLAASVIS. The Cytoplasmic segment spans residues 89–102; it reads KWRDNDAFSYGYVR. The chain crosses the membrane as a helical span at residues 103–123; it reads AEVLAGFVNGLFLIFTAFFIF. At 124–140 the chain is on the lumenal side; that stretch reads SEGVERALAPPDVHHER. Residues 141–161 form a helical membrane-spanning segment; the sequence is LLLVSILGFVVNLIGIFVFKH. The interval 161–218 is his-rich loop; it reads HGGHGHSHGSGHGHSHSLFNGALDQAHGHVDHCHSHEVKHGAAHSHDHAHGHGHFHSH. At 162–236 the chain is on the cytoplasmic side; the sequence is GGHGHSHGSG…TGPSRQILQG (75 aa). Residues 194 to 222 show a composition bias toward basic and acidic residues; it reads HSHEVKHGAAHSHDHAHGHGHFHSHDGPS. Residues 194-226 are disordered; that stretch reads HSHEVKHGAAHSHDHAHGHGHFHSHDGPSLKET. A helical membrane pass occupies residues 237–257; sequence VFLHILADTLGSIGVIASAIM. At 258–262 the chain is on the lumenal side; sequence MQNFG. Residues 263-283 form a helical membrane-spanning segment; it reads LMIADPICSILIAILIVVSVI. The Cytoplasmic segment spans residues 284 to 376; it reads PLLRESVGIL…LYVQIDFAAM (93 aa).

This sequence belongs to the cation diffusion facilitator (CDF) transporter (TC 2.A.4) family. SLC30A subfamily. As to quaternary structure, homooligomer. Highly expressed in megakaryocytes and other bone marrow cells and in the epithelium of the small intestine. Expressed in testis (in Leydig cells), adrenal gland (in adrenal medula, zona fasciculata and zona of reticularis), and pituitary gland (in somatotropic cells).

The protein localises to the golgi apparatus membrane. It is found in the cytoplasmic vesicle. The protein resides in the golgi apparatus. Its subcellular location is the trans-Golgi network. It localises to the sarcoplasmic reticulum. The protein localises to the mitochondrion. It catalyses the reaction Zn(2+)(in) = Zn(2+)(out). Functionally, zinc ion transporter mediating zinc entry from the cytosol into the lumen of organelles along the secretory pathway. By contributing to zinc ion homeostasis within the early secretory pathway, regulates the activation and folding of enzymes like alkaline phosphatases. The chain is Zinc transporter 7 from Homo sapiens (Human).